A 579-amino-acid chain; its full sequence is Mitogen-activated protein kinase kinase kinase 7 (579 aa).

The interaction with MAPK8IP1 stretch occupies residues 1-300 (MSTASAASSS…FPGADEPLQY (300 aa)). One can recognise a Protein kinase domain in the interval 36-291 (IEVEEVVGRG…KIMTHLMRYF (256 aa)). Residues 42-50 (VGRGAFGVV) and K63 contribute to the ATP site. Residue K72 forms a Glycyl lysine isopeptide (Lys-Gly) (interchain with G-Cter in ubiquitin) linkage. Catalysis depends on D156, which acts as the Proton acceptor. K158 is covalently cross-linked (Glycyl lysine isopeptide (Lys-Gly) (interchain with G-Cter in ubiquitin)). 2 positions are modified to phosphothreonine; by autocatalysis: T184 and T187. Residue S192 is modified to Phosphoserine; by autocatalysis. K209 is covalently cross-linked (Glycyl lysine isopeptide (Lys-Gly) (interchain with G-Cter in ubiquitin)). 2 disordered regions span residues 301–339 (PCQYSDEGQSNSATSTGSFMDITSTNTSNKSDTNMEQVP) and 354–391 (KNQAKQQSESGRLSLGASRGSSVESLPPTSEGKRMSAD). Residues 306–322 (DEGQSNSATSTGSFMDI) are compositionally biased toward polar residues. 2 stretches are compositionally biased toward low complexity: residues 323-334 (TSTNTSNKSDTN) and 361-375 (SESGRLSLGASRGSS). Residues S367, S389, and S412 each carry the phosphoserine modification. The segment covering 416 to 425 (LTVTGTDPGQ) has biased composition (polar residues). Positions 416 to 466 (LTVTGTDPGQVSSRSSSPSVRMITTSGPTSEKPARSHPWTPDDSTDTNGSD) are disordered. Residues 426 to 436 (VSSRSSSPSVR) are compositionally biased toward low complexity. Residue S428 is modified to Phosphoserine.

This sequence belongs to the protein kinase superfamily. STE Ser/Thr protein kinase family. MAP kinase kinase kinase subfamily. Can form homodimer. Binds both upstream activators and downstream substrates in multimolecular complexes. Interacts with TAB1/MAP3K7IP1, TAB2/MAP3K7IP2 and TAB3/MAP3K7IP3. Identified in the TRIKA2 complex composed of MAP3K7/TAK1, TAB1/MAP3K7IP1 and TAB2/MAP3K7IP2. Interacts with PPM1L and PPM1B/PP2CB. Interaction with PP2A and PPP6C leads to its repressed activity. Interacts with TRAF6 and TAB1/MAP3K7IP1; during IL-1 signaling. Interacts with TAOK1 and TAOK2; interaction with TAOK2 interferes with MAP3K7 interaction with IKKA, thus preventing NF-kappa-B activation. Interacts with DYNC2I2 (via WD domains). Interacts with CYLD and RBCK1. Interacts with TGFBR1; induces MAP3K7/TAK1 activation by TRAF6. Interacts with MAPK8IP1 and SMAD6. Interacts with isoform 1 of VRK2. Interacts with DAB2; the interaction is induced by TGF-beta stimulation and may mediate TGF-beta stimulated JNK activation. Interacts with TRIM5. Part of a complex containing ITCH, NDFIP1 and MAP3K7. Interacts with IFIT5; the interaction synergizes the recruitment of IKK to MAP3K7 and enhances IKK phosphorylation. Interacts with PLEKHM1 (via N- and C-terminus). Found in a complex with SH3RF1, RAC2, MAP2K7/MKK7, MAPK8IP1/JIP1, MAPK8/JNK1 and MAPK9/JNK2. Interacts with SASH1. Interacts with RIPK1. Mg(2+) is required as a cofactor. In terms of processing, association with TAB1/MAP3K7IP1 promotes autophosphorylation at Ser-192 and subsequent activation. Association with TAB2/MAP3K7IP2, itself associated with free unanchored Lys-63 polyubiquitin chain, promotes autophosphorylation and subsequent activation of MAP3K7. Dephosphorylation at Ser-192 by PPM1B/PP2CB and at Thr-187 by PP2A and PPP6C leads to inactivation. Post-translationally, 'Lys-48'-linked polyubiquitination at Lys-72 is induced by TNFalpha, and leads to proteasomal degradation. Undergoes 'Lys-48'-linked polyubiquitination catalyzed by ITCH. 'Lys-63'-linked polyubiquitination at Lys-158 by TRIM8 does not lead to proteasomal degradation but contributes to autophosphorylation and activation. Deubiquitinated by CYLD, a protease that selectively cleaves 'Lys-63'-linked ubiquitin chains. Deubiquitinated by USP19; leading to negative regulation of TNF-alpha- and IL-1beta-triggered NF-kappa-B activation.

Its subcellular location is the cytoplasm. The protein resides in the cell membrane. It catalyses the reaction L-seryl-[protein] + ATP = O-phospho-L-seryl-[protein] + ADP + H(+). The catalysed reaction is L-threonyl-[protein] + ATP = O-phospho-L-threonyl-[protein] + ADP + H(+). Its activity is regulated as follows. Activated by pro-inflammatory cytokines and in response to physical and chemical stresses, including osmotic stress, oxidative stress, arsenic and ultraviolet light irradiation. Activated by 'Lys-63'-linked polyubiquitination and by autophosphorylation. Association with TAB1/MAP3K7IP1 and TAB2/MAP3K7IP2 promotes activation through autophosphorylation, whereas PPM1B/PP2CB, PP2A and PPP6C dephosphorylation leads to inactivation. Ceramides are also able to activate MAP3K7/TAK1. In terms of biological role, serine/threonine kinase which acts as an essential component of the MAP kinase signal transduction pathway. Plays an important role in the cascades of cellular responses evoked by changes in the environment. Mediates signal transduction of TRAF6, various cytokines including interleukin-1 (IL-1), transforming growth factor-beta (TGFB), TGFB-related factors like BMP2 and BMP4, toll-like receptors (TLR), tumor necrosis factor receptor CD40 and B-cell receptor (BCR). Once activated, acts as an upstream activator of the MKK/JNK signal transduction cascade and the p38 MAPK signal transduction cascade through the phosphorylation and activation of several MAP kinase kinases like MAP2K1/MEK1, MAP2K3/MKK3, MAP2K6/MKK6 and MAP2K7/MKK7. These MAP2Ks in turn activate p38 MAPKs and c-jun N-terminal kinases (JNKs); both p38 MAPK and JNK pathways control the transcription factors activator protein-1 (AP-1). Independently of MAP2Ks and p38 MAPKs, acts as a key activator of NF-kappa-B by promoting activation of the I-kappa-B-kinase (IKK) core complex. Mechanistically, recruited to polyubiquitin chains of RIPK2 and IKBKG/NEMO via TAB2/MAP3K7IP2 and TAB3/MAP3K7IP3, and catalyzes phosphorylation and activation of IKBKB/IKKB component of the IKK complex, leading to NF-kappa-B activation. In osmotic stress signaling, plays a major role in the activation of MAPK8/JNK1, but not that of NF-kappa-B. Promotes TRIM5 capsid-specific restriction activity. Phosphorylates RIPK1 at 'Ser-321' which positively regulates RIPK1 interaction with RIPK3 to promote necroptosis but negatively regulates RIPK1 kinase activity and its interaction with FADD to mediate apoptosis. Phosphorylates STING1 in response to cGAMP-activation, promoting association between STEEP1 and STING1 and STING1 translocation to COPII vesicles. This is Mitogen-activated protein kinase kinase kinase 7 (MAP3K7) from Bos taurus (Bovine).